The primary structure comprises 58 residues: UPF0434 protein Sfri_2386 (58 aa).

This sequence belongs to the UPF0434 family.

This chain is UPF0434 protein Sfri_2386, found in Shewanella frigidimarina (strain NCIMB 400).